The sequence spans 121 residues: Putative RNase MJ1216 (121 aa).

Active-site residues include Arg-76 and His-81. Residues 76–83 (RDKLIHQY) carry the RX(4)HXY motif motif. Tyr-83 bears the O-di-AMP-tyrosine mark.

Belongs to the HepT RNase toxin family. As to quaternary structure, homodimer, probably forms a complex with antitoxin MJ1215 or MJ1217. Modified by antitoxin MJ1215 or MJ1217; probably at least 2 successive AMPylation events occur on Tyr-83.

Functionally, probable toxic component of a putative type VII toxin-antitoxin (TA) system, probably an RNase. Probably neutralized by antitoxin MJ1215 or MJ1217. Neutralization may be due to AMPylation by antitoxin. This chain is Putative RNase MJ1216, found in Methanocaldococcus jannaschii (strain ATCC 43067 / DSM 2661 / JAL-1 / JCM 10045 / NBRC 100440) (Methanococcus jannaschii).